Here is a 247-residue protein sequence, read N- to C-terminus: 3-deoxy-manno-octulosonate cytidylyltransferase (247 aa).

The protein belongs to the KdsB family.

It localises to the cytoplasm. The catalysed reaction is 3-deoxy-alpha-D-manno-oct-2-ulosonate + CTP = CMP-3-deoxy-beta-D-manno-octulosonate + diphosphate. It participates in nucleotide-sugar biosynthesis; CMP-3-deoxy-D-manno-octulosonate biosynthesis; CMP-3-deoxy-D-manno-octulosonate from 3-deoxy-D-manno-octulosonate and CTP: step 1/1. It functions in the pathway bacterial outer membrane biogenesis; lipopolysaccharide biosynthesis. Functionally, activates KDO (a required 8-carbon sugar) for incorporation into bacterial lipopolysaccharide in Gram-negative bacteria. The polypeptide is 3-deoxy-manno-octulosonate cytidylyltransferase (Pelodictyon phaeoclathratiforme (strain DSM 5477 / BU-1)).